We begin with the raw amino-acid sequence, 116 residues long: MGSAPAQIPTSFGHELRACLRCRLVKTYDQFRDAGCENCPFFKMEEDHERIVEVTTPNFNGIISVMDPSRSWAARWLRIGKFAPGCYTLAVSEPLPEEMQHLCQEERVQYVLPKRM.

Residues 19–39 form a C4-type zinc finger; sequence CLRCRLVKTYDQFRDAGCENC.

It belongs to the SPT4 family.

Its subcellular location is the nucleus. Its function is as follows. May regulate transcription elongation by RNA polymerase II. May enhance transcriptional pausing at sites proximal to the promoter, which may in turn facilitate the assembly of an elongation competent RNA polymerase II complex. This Arabidopsis thaliana (Mouse-ear cress) protein is Transcription elongation factor SPT4 homolog 2.